The chain runs to 107 residues: MSVEAVVKQVDGDALEAAIKGDKLLVCDFFATWCGPCKSLAPKLDAMAKENEKVIFVKLDVDECQDVAEKYRVTAMPTLIVFKNGCEIGHVVGANEAGIRELIQANA.

In terms of domain architecture, Thioredoxin spans Ser2 to Ala107. Active-site nucleophile residues include Cys34 and Cys37. Residues Cys34 and Cys37 are joined by a disulfide bond.

The protein belongs to the thioredoxin family.

Functionally, participates in various redox reactions through the reversible oxidation of its active center dithiol to a disulfide and catalyzes dithiol-disulfide exchange reactions. The polypeptide is Thioredoxin (TRX) (Echinococcus granulosus (Hydatid tapeworm)).